We begin with the raw amino-acid sequence, 330 residues long: tRNA U34 carboxymethyltransferase (330 aa).

Carboxy-S-adenosyl-L-methionine is bound by residues Lys-91, Trp-105, Lys-110, Gly-130, 152 to 154, 181 to 182, Met-196, Tyr-200, and Arg-315; these read DPS and IE.

This sequence belongs to the class I-like SAM-binding methyltransferase superfamily. CmoB family. As to quaternary structure, homotetramer.

The catalysed reaction is carboxy-S-adenosyl-L-methionine + 5-hydroxyuridine(34) in tRNA = 5-carboxymethoxyuridine(34) in tRNA + S-adenosyl-L-homocysteine + H(+). Catalyzes carboxymethyl transfer from carboxy-S-adenosyl-L-methionine (Cx-SAM) to 5-hydroxyuridine (ho5U) to form 5-carboxymethoxyuridine (cmo5U) at position 34 in tRNAs. This is tRNA U34 carboxymethyltransferase from Shewanella sp. (strain ANA-3).